The following is a 363-amino-acid chain: Protein-arginine kinase (363 aa).

The Phosphagen kinase C-terminal domain occupies 24–254 (IVLSSRIRLA…AQLIEQERSA (231 aa)). Position 27–31 (27–31 (SSRIR)) interacts with ATP. Residues arginine 29, arginine 40, and arginine 86 each carry the phosphoarginine; by autocatalysis modification. Residues histidine 92, arginine 125, and 176–180 (RASVM) each bind ATP. Arginine 190 is modified (phosphoarginine; by autocatalysis). ATP is bound at residue 207-212 (RGIYGE). 3 positions are modified to phosphoarginine; by autocatalysis: arginine 255, arginine 269, and arginine 272. The RDXXRA motif of the pArg binding pocket involved in allosteric regulation signature appears at 337–342 (RDIRRA). Arginine 346 carries the post-translational modification Phosphoarginine; by autocatalysis.

It belongs to the ATP:guanido phosphotransferase family. Interacts with CtsR in its autophosphorylated form. Interacts with McsA in nonstressed as well as in heat-stressed cells, whereas strongly interacts with ClpC only in nonstressed cells. Autophosphorylated on Arg residues. Phosphorylation on Arg-40 and Arg-86 are up-regulated upon stress conditions.

Its subcellular location is the cytoplasm. It catalyses the reaction L-arginyl-[protein] + ATP = N(omega)-phospho-L-arginyl-[protein] + ADP + H(+). Appears to be allosterically activated by the binding of pArg-containing polypeptides to the pArg-binding pocket localized in the C-terminal domain of McsB. The McsB kinase is inhibited in nonstressed cells by direct interaction with ClpC; upon heat exposure, the interaction of McsB with ClpC is dramatically decreased, leading to McsB release and activation during heat stress. Its kinase activity is counteracted by the protein-arginine-phosphatase YwlE in vivo. Requires McsA for full kinase activity. In terms of biological role, catalyzes the specific phosphorylation of arginine residues in a large number of proteins. Is part of the bacterial stress response system, where it is involved in regulating the global heat shock repressor CtsR; phosphorylates arginine residues in the winged helix-turn-helix domain of CtsR, thereby preventing its binding to DNA and consequently inducing the expression of repressed genes. The transcriptional repressor HrcA, the chaperone GroEL, the unfoldase ClpC, together with several ribosomal subunits, represent other physiological targets of McsB under stress conditions. Protein arginine phosphorylation has a physiologically important role and is involved in the regulation of many critical cellular processes, such as protein homeostasis, motility, competence, and stringent and stress responses, by regulating gene expression and protein activity. Functions as an adapter whose kinase activity is required for ClpCP-mediated degradation of CtsR during heat stress. Is required for the delocalization of competence proteins from the cell poles, probably via a role in the degradation of anchor proteins. This chain is Protein-arginine kinase, found in Bacillus subtilis (strain 168).